A 157-amino-acid chain; its full sequence is 3-hydroxyacyl-[acyl-carrier-protein] dehydratase FabZ (157 aa).

Residue His-58 is part of the active site.

The protein belongs to the thioester dehydratase family. FabZ subfamily.

The protein localises to the cytoplasm. The catalysed reaction is a (3R)-hydroxyacyl-[ACP] = a (2E)-enoyl-[ACP] + H2O. Its function is as follows. Involved in unsaturated fatty acids biosynthesis. Catalyzes the dehydration of short chain beta-hydroxyacyl-ACPs and long chain saturated and unsaturated beta-hydroxyacyl-ACPs. In Rhizorhabdus wittichii (strain DSM 6014 / CCUG 31198 / JCM 15750 / NBRC 105917 / EY 4224 / RW1) (Sphingomonas wittichii), this protein is 3-hydroxyacyl-[acyl-carrier-protein] dehydratase FabZ.